Consider the following 61-residue polypeptide: Small ribosomal subunit protein uS14 (61 aa).

Zn(2+) contacts are provided by Cys24, Cys27, Cys40, and Cys43.

The protein belongs to the universal ribosomal protein uS14 family. Zinc-binding uS14 subfamily. In terms of assembly, part of the 30S ribosomal subunit. Contacts proteins S3 and S10. Zn(2+) is required as a cofactor.

In terms of biological role, binds 16S rRNA, required for the assembly of 30S particles and may also be responsible for determining the conformation of the 16S rRNA at the A site. The sequence is that of Small ribosomal subunit protein uS14 from Geobacillus stearothermophilus (Bacillus stearothermophilus).